Here is a 968-residue protein sequence, read N- to C-terminus: Putative pectinesterase/pectinesterase inhibitor 26 (968 aa).

A helical membrane pass occupies residues 33 to 53 (IGISVAVLVAIIISSTVTIAI). The interval 71–230 (LTPAASLKTV…TEFTSNSLAI (160 aa)) is pectinesterase inhibitor 26 A. N-linked (GlcNAc...) asparagine glycans are attached at residues Asn-101, Asn-158, Asn-219, Asn-295, Asn-352, Asn-400, Asn-464, Asn-541, Asn-559, and Asn-603. Residues 265 to 430 (LTPAASLRNV…RKFTSNSLAI (166 aa)) are pectinesterase inhibitor 26 B. The segment at 453-614 (PTPSSVLRTV…TEFTSNSLAI (162 aa)) is pectinesterase inhibitor 26 C. A pectinesterase 26 region spans residues 660-954 (HVTVAADGSG…FTVKYFLRGD (295 aa)). Thr-735 contacts substrate. Asn-737 carries an N-linked (GlcNAc...) asparagine glycan. Gln-765 contributes to the substrate binding site. Asp-788 functions as the Proton donor; for pectinesterase activity in the catalytic mechanism. Cys-802 and Cys-822 are joined by a disulfide. The active-site Nucleophile; for pectinesterase activity is Asp-809. N-linked (GlcNAc...) asparagine glycosylation occurs at Asn-863. The substrate site is built by Arg-872 and Trp-874. Asn-900 carries N-linked (GlcNAc...) asparagine glycosylation.

This sequence in the N-terminal section; belongs to the PMEI family. It in the C-terminal section; belongs to the pectinesterase family. Expressed in flowers.

Its subcellular location is the membrane. The catalysed reaction is [(1-&gt;4)-alpha-D-galacturonosyl methyl ester](n) + n H2O = [(1-&gt;4)-alpha-D-galacturonosyl](n) + n methanol + n H(+). The protein operates within glycan metabolism; pectin degradation; 2-dehydro-3-deoxy-D-gluconate from pectin: step 1/5. Its function is as follows. Acts in the modification of cell walls via demethylesterification of cell wall pectin. The chain is Putative pectinesterase/pectinesterase inhibitor 26 (PME26) from Arabidopsis thaliana (Mouse-ear cress).